The following is an 898-amino-acid chain: Pyruvate, phosphate dikinase (898 aa).

Positions 1-355 are N-terminal; it reads MAKWVYTFGA…LWMLQTRSGK (355 aa). Arginine 96 contributes to the ATP binding site. Residues 356 to 412 form a linker 1 region; the sequence is RTAKSALKIAVDMAEEGLISKEEAVARIDPASLDQLLHPTIDPHARRDIIGSGLPAS. Positions 413–511 are central; the sequence is PGAATGEIVF…TLRKGDVITI (99 aa). The residue at position 466 (threonine 466) is a Phosphothreonine; by PDRP1. The Tele-phosphohistidine intermediate role is filled by histidine 468. Residues 512 to 546 are linker 2; it reads DGSSGQVLKGEIPMLQPELSGDFGKIMQWADASRR. The C-terminal stretch occupies residues 547–898; sequence MTVRTNAETP…VAEVQALAAS (352 aa). Positions 574, 630, 758, 779, 780, 781, and 782 each coordinate substrate. Position 758 (glutamate 758) interacts with Mg(2+). Aspartate 782 is a binding site for Mg(2+). Cysteine 844 functions as the Proton donor in the catalytic mechanism.

Belongs to the PEP-utilizing enzyme family. Homodimer. Requires Mg(2+) as cofactor. In terms of processing, phosphorylation of Thr-466 in the dark inactivates the enzyme. Dephosphorylation upon light stimulation reactivates the enzyme.

The enzyme catalyses pyruvate + phosphate + ATP = phosphoenolpyruvate + AMP + diphosphate + H(+). Activated by light-induced dephosphorylation. Inhibited by dark-induced phosphorylation. Both reactions are catalyzed by PDRP1. Functionally, catalyzes the reversible phosphorylation of pyruvate and phosphate. The sequence is that of Pyruvate, phosphate dikinase (ppdK) from Rhizobium meliloti (strain 1021) (Ensifer meliloti).